Consider the following 472-residue polypeptide: Eukaryotic translation initiation factor 2 subunit 3 (472 aa).

N-acetylalanine; partial is present on Ala2. Residues 39 to 247 enclose the tr-type G domain; sequence QATINIGTIG…YIVKKIPVPL (209 aa). The segment at 48-55 is G1; sequence GHVAHGKS. Position 51-56 (51-56) interacts with GTP; sequence AHGKST. The segment at 76 to 80 is G2; it reads NITIK. Positions 134–137 are G3; sequence DCPG. GTP contacts are provided by residues 190 to 193 and 225 to 227; these read NKID and SAQ. The G4 stretch occupies residues 190-193; the sequence is NKID. Positions 225 to 227 are G5; that stretch reads SAQ. The interacts with CDC123 stretch occupies residues 457-469; sequence GQIRRGVTIKPTV.

The protein belongs to the TRAFAC class translation factor GTPase superfamily. Classic translation factor GTPase family. EIF2G subfamily. In terms of assembly, eukaryotic translation initiation factor 2 eIF2 is a heterotrimeric complex composed of an alpha (EIF2S1), a beta (EIF2S2) and a gamma (EIF2S3) chain. eIF2 is member of the 43S pre-initiation complex (43S PIC).

The protein resides in the cytoplasm. The protein localises to the cytosol. The catalysed reaction is GTP + H2O = GDP + phosphate + H(+). In terms of biological role, member of the eIF2 complex that functions in the early steps of protein synthesis by forming a ternary complex with GTP and initiator tRNA. This complex binds to a 40S ribosomal subunit, followed by mRNA binding to form the 43S pre-initiation complex (43S PIC). Junction of the 60S ribosomal subunit to form the 80S initiation complex is preceded by hydrolysis of the GTP bound to eIF2 and release of an eIF2-GDP binary complex. In order for eIF2 to recycle and catalyze another round of initiation, the GDP bound to eIF2 must exchange with GTP by way of a reaction catalyzed by eIF-2B. The protein is Eukaryotic translation initiation factor 2 subunit 3 (EIF2S3) of Gallus gallus (Chicken).